Reading from the N-terminus, the 149-residue chain is UPF0179 protein MM_0589 (149 aa).

The protein belongs to the UPF0179 family.

In Methanosarcina mazei (strain ATCC BAA-159 / DSM 3647 / Goe1 / Go1 / JCM 11833 / OCM 88) (Methanosarcina frisia), this protein is UPF0179 protein MM_0589.